The chain runs to 1009 residues: Regulator of telomere elongation helicase 1 homolog (1009 aa).

The Helicase ATP-binding domain occupies 7–322 (AGIPVHFPFE…KEMLLELEKA (316 aa)). 42–49 (SPTGTGKT) contributes to the ATP binding site. [4Fe-4S] cluster is bound by residues cysteine 146, cysteine 164, cysteine 173, and cysteine 209. A DEAH box motif is present at residues 252 to 255 (DEAH).

This sequence belongs to the helicase family. RAD3/XPD subfamily.

The protein resides in the nucleus. It carries out the reaction ATP + H2O = ADP + phosphate + H(+). In terms of biological role, a probable ATP-dependent DNA helicase implicated in DNA repair and the maintenance of genomic stability. Acts as an anti-recombinase to counteract toxic recombination and limit crossover during meiosis. Regulates meiotic recombination and crossover homeostasis by physically dissociating strand invasion events and thereby promotes noncrossover repair by meiotic synthesis dependent strand annealing (SDSA) as well as disassembly of D loop recombination intermediates. The polypeptide is Regulator of telomere elongation helicase 1 homolog (Drosophila persimilis (Fruit fly)).